A 262-amino-acid polypeptide reads, in one-letter code: ATP synthase subunit a (262 aa).

A run of 7 helical transmembrane segments spans residues 30–50, 64–84, 91–111, 123–143, 149–169, 195–215, and 220–240; these read ITSL…LTIF, WNIV…DQIG, LIYF…NILG, ISVT…IGFS, FFSL…LVLI, LFGV…SLLL, and ITLP…VALL.

It belongs to the ATPase A chain family. In terms of assembly, F-type ATPases have 2 components, CF(1) - the catalytic core - and CF(0) - the membrane proton channel. CF(1) has five subunits: alpha(3), beta(3), gamma(1), delta(1), epsilon(1). CF(0) has three main subunits: a, b and c.

Its subcellular location is the mitochondrion inner membrane. Mitochondrial membrane ATP synthase (F(1)F(0) ATP synthase or Complex V) produces ATP from ADP in the presence of a proton gradient across the membrane which is generated by electron transport complexes of the respiratory chain. F-type ATPases consist of two structural domains, F(1) - containing the extramembraneous catalytic core and F(0) - containing the membrane proton channel, linked together by a central stalk and a peripheral stalk. During catalysis, ATP synthesis in the catalytic domain of F(1) is coupled via a rotary mechanism of the central stalk subunits to proton translocation. Key component of the proton channel; it may play a direct role in the translocation of protons across the membrane. The chain is ATP synthase subunit a (ATP6) from Allomyces macrogynus.